We begin with the raw amino-acid sequence, 380 residues long: Cytochrome b (380 aa).

Helical transmembrane passes span 33–53 (FGSL…FLAM), 77–98 (WLIR…YMHI), 113–133 (WNIG…GYVL), and 178–198 (FFAF…LHLL). The heme b site is built by His-83 and His-97. Residues His-182 and His-196 each contribute to the heme b site. His-201 provides a ligand contact to a ubiquinone. 4 helical membrane passes run 226 to 246 (YKDL…ALFA), 288 to 308 (LGGV…PILH), 320 to 340 (LTQF…WIGG), and 347 to 367 (FIII…VLSP).

The protein belongs to the cytochrome b family. As to quaternary structure, the cytochrome bc1 complex contains 3 respiratory subunits (MT-CYB, CYC1 and UQCRFS1), 2 core proteins (UQCRC1 and UQCRC2) and probably 6 low-molecular weight proteins. Heme b serves as cofactor.

It is found in the mitochondrion inner membrane. In terms of biological role, component of the ubiquinol-cytochrome c reductase complex (complex III or cytochrome b-c1 complex) that is part of the mitochondrial respiratory chain. The b-c1 complex mediates electron transfer from ubiquinol to cytochrome c. Contributes to the generation of a proton gradient across the mitochondrial membrane that is then used for ATP synthesis. This Oncorhynchus keta (Chum salmon) protein is Cytochrome b (mt-cyb).